The sequence spans 89 residues: Small ribosomal subunit protein uS15 (89 aa).

The protein belongs to the universal ribosomal protein uS15 family. In terms of assembly, part of the 30S ribosomal subunit. Forms a bridge to the 50S subunit in the 70S ribosome, contacting the 23S rRNA.

Its function is as follows. One of the primary rRNA binding proteins, it binds directly to 16S rRNA where it helps nucleate assembly of the platform of the 30S subunit by binding and bridging several RNA helices of the 16S rRNA. Forms an intersubunit bridge (bridge B4) with the 23S rRNA of the 50S subunit in the ribosome. The protein is Small ribosomal subunit protein uS15 of Rhizobium meliloti (strain 1021) (Ensifer meliloti).